The primary structure comprises 1457 residues: DNA-directed RNA polymerase III subunit RPC1 (1457 aa).

Cysteine 67, cysteine 70, cysteine 77, histidine 80, cysteine 107, cysteine 110, and cysteine 154 together coordinate Zn(2+). The Mg(2+) site is built by aspartate 508, aspartate 510, and aspartate 512. The interval 854–866 (PPEFLFHSISGRE) is bridging helix.

This sequence belongs to the RNA polymerase beta' chain family. In terms of assembly, component of the RNA polymerase III (Pol III) complex consisting of 17 subunits.

Its subcellular location is the nucleus. The catalysed reaction is RNA(n) + a ribonucleoside 5'-triphosphate = RNA(n+1) + diphosphate. In terms of biological role, DNA-dependent RNA polymerase catalyzes the transcription of DNA into RNA using the four ribonucleoside triphosphates as substrates. Largest and catalytic core component of RNA polymerase III which synthesizes small RNAs, such as 5S rRNA and tRNAs. Forms the polymerase active center together with the second largest subunit. A single-stranded DNA template strand of the promoter is positioned within the central active site cleft of Pol III. A bridging helix emanates from RPC1 and crosses the cleft near the catalytic site and is thought to promote translocation of Pol III by acting as a ratchet that moves the RNA-DNA hybrid through the active site by switching from straight to bent conformations at each step of nucleotide addition. The protein is DNA-directed RNA polymerase III subunit RPC1 (RPC1) of Debaryomyces hansenii (strain ATCC 36239 / CBS 767 / BCRC 21394 / JCM 1990 / NBRC 0083 / IGC 2968) (Yeast).